The sequence spans 307 residues: MDWQQLHLQCAKQDVDLAESLLLEEGALSISLEDAGDQPLFEPLPGQSPLWDEVILTGLFTADTAQDIESMAQTLAAQVNARRVWTTALADTDWEREWMSHYVPIECTNNLWIVPKWMTPPNPDAVNIMMDPGLAFGTGYHATTRLCLDWLTDQDLSDKVIIDYGCGSGILGIAALLLGAKQVYSVDIDPQAVLATKQNAERNDVTHALEVYLPEDFAKAFAAGDIPKADIITANILAKPLMELAPYLATLIKPKGGIVLAGLISEQLEDMVRAYEPWFNLDTRHSYEKSDDHDDSHWHRLSGTFTG.

S-adenosyl-L-methionine contacts are provided by T144, G165, D187, and N235.

It belongs to the methyltransferase superfamily. PrmA family.

It is found in the cytoplasm. It carries out the reaction L-lysyl-[protein] + 3 S-adenosyl-L-methionine = N(6),N(6),N(6)-trimethyl-L-lysyl-[protein] + 3 S-adenosyl-L-homocysteine + 3 H(+). Methylates ribosomal protein L11. The sequence is that of Ribosomal protein L11 methyltransferase from Psychrobacter sp. (strain PRwf-1).